The following is a 1094-amino-acid chain: Carbamoyl phosphate synthase large chain (1094 aa).

The tract at residues 1–402 (MPRRSDLHRI…AFQKALRALE (402 aa)) is carboxyphosphate synthetic domain. ATP-binding residues include Arg-129, Arg-169, Gly-175, Gly-176, Arg-208, Leu-210, Glu-215, Gly-241, Val-242, His-243, Gln-285, and Glu-299. The 196-residue stretch at 133 to 328 (GEAMEKIGLR…IARIGAKLAV (196 aa)) folds into the ATP-grasp 1 domain. Gln-285, Glu-299, and Asn-301 together coordinate Mg(2+). Residues Gln-285, Glu-299, and Asn-301 each contribute to the Mn(2+) site. Residues 403 to 552 (TGRSGWTIAE…YLYGNYDEES (150 aa)) are oligomerization domain. Residues 553–936 (EAATEGRKKV…AFMKSQLAAD (384 aa)) are carbamoyl phosphate synthetic domain. An ATP-grasp 2 domain is found at 679–870 (EAIARELGIE…LPSVAARLML (192 aa)). ATP is bound by residues Arg-715, Arg-754, Leu-756, Glu-761, Gly-786, Ile-787, His-788, Ser-789, Gln-829, and Glu-841. Mg(2+)-binding residues include Gln-829, Glu-841, and Asn-843. Gln-829, Glu-841, and Asn-843 together coordinate Mn(2+). An MGS-like domain is found at 937–1077 (NALPREGTVF…QEWHEILRAP (141 aa)). The interval 937–1094 (NALPREGTVF…AGSTQPAGVA (158 aa)) is allosteric domain.

This sequence belongs to the CarB family. Composed of two chains; the small (or glutamine) chain promotes the hydrolysis of glutamine to ammonia, which is used by the large (or ammonia) chain to synthesize carbamoyl phosphate. Tetramer of heterodimers (alpha,beta)4. It depends on Mg(2+) as a cofactor. Mn(2+) serves as cofactor.

It catalyses the reaction hydrogencarbonate + L-glutamine + 2 ATP + H2O = carbamoyl phosphate + L-glutamate + 2 ADP + phosphate + 2 H(+). It carries out the reaction hydrogencarbonate + NH4(+) + 2 ATP = carbamoyl phosphate + 2 ADP + phosphate + 2 H(+). The protein operates within amino-acid biosynthesis; L-arginine biosynthesis; carbamoyl phosphate from bicarbonate: step 1/1. It functions in the pathway pyrimidine metabolism; UMP biosynthesis via de novo pathway; (S)-dihydroorotate from bicarbonate: step 1/3. Large subunit of the glutamine-dependent carbamoyl phosphate synthetase (CPSase). CPSase catalyzes the formation of carbamoyl phosphate from the ammonia moiety of glutamine, carbonate, and phosphate donated by ATP, constituting the first step of 2 biosynthetic pathways, one leading to arginine and/or urea and the other to pyrimidine nucleotides. The large subunit (synthetase) binds the substrates ammonia (free or transferred from glutamine from the small subunit), hydrogencarbonate and ATP and carries out an ATP-coupled ligase reaction, activating hydrogencarbonate by forming carboxy phosphate which reacts with ammonia to form carbamoyl phosphate. The polypeptide is Carbamoyl phosphate synthase large chain (Gemmatimonas aurantiaca (strain DSM 14586 / JCM 11422 / NBRC 100505 / T-27)).